Here is a 392-residue protein sequence, read N- to C-terminus: Chorismate synthase (392 aa).

NADP(+)-binding residues include R40 and R46. FMN-binding positions include 135-137, 256-257, G300, 315-319, and R341; these read RAS, QA, and KPIST.

It belongs to the chorismate synthase family. In terms of assembly, homotetramer. FMNH2 is required as a cofactor.

The enzyme catalyses 5-O-(1-carboxyvinyl)-3-phosphoshikimate = chorismate + phosphate. It functions in the pathway metabolic intermediate biosynthesis; chorismate biosynthesis; chorismate from D-erythrose 4-phosphate and phosphoenolpyruvate: step 7/7. In terms of biological role, catalyzes the anti-1,4-elimination of the C-3 phosphate and the C-6 proR hydrogen from 5-enolpyruvylshikimate-3-phosphate (EPSP) to yield chorismate, which is the branch point compound that serves as the starting substrate for the three terminal pathways of aromatic amino acid biosynthesis. This reaction introduces a second double bond into the aromatic ring system. In Acidothermus cellulolyticus (strain ATCC 43068 / DSM 8971 / 11B), this protein is Chorismate synthase.